The sequence spans 499 residues: 3-octaprenyl-4-hydroxybenzoate carboxy-lyase (499 aa).

Residue Asn173 participates in Mn(2+) binding. Residues 176–178 (IYR), 190–192 (RWL), and 195–196 (RG) each bind prenylated FMN. Glu239 is a binding site for Mn(2+). Asp288 (proton donor) is an active-site residue.

This sequence belongs to the UbiD family. Homohexamer. Prenylated FMN serves as cofactor. The cofactor is Mn(2+).

It localises to the cell membrane. It carries out the reaction a 4-hydroxy-3-(all-trans-polyprenyl)benzoate + H(+) = a 2-(all-trans-polyprenyl)phenol + CO2. It functions in the pathway cofactor biosynthesis; ubiquinone biosynthesis. In terms of biological role, catalyzes the decarboxylation of 3-octaprenyl-4-hydroxy benzoate to 2-octaprenylphenol, an intermediate step in ubiquinone biosynthesis. This is 3-octaprenyl-4-hydroxybenzoate carboxy-lyase from Blochmanniella floridana.